The following is a 323-amino-acid chain: UPF0200/UPF0201 protein AF_1395 (323 aa).

The interval 1–185 (MVLEMKVIAF…EKIRQILLKL (185 aa)) is UPF0200. 12–19 (GYPLSGKS) lines the ATP pocket. Residues 186-323 (AKNVEIEIRT…GRPVKEIDKL (138 aa)) are UPF0201.

In the N-terminal section; belongs to the UPF0200 family. This sequence in the C-terminal section; belongs to the UPF0201 family.

In Archaeoglobus fulgidus (strain ATCC 49558 / DSM 4304 / JCM 9628 / NBRC 100126 / VC-16), this protein is UPF0200/UPF0201 protein AF_1395.